The primary structure comprises 197 residues: Small ribosomal subunit protein uS4c (197 aa).

One can recognise an S4 RNA-binding domain in the interval 92–153 (MRLDAVVYRL…APIVEHAKTF (62 aa)).

Belongs to the universal ribosomal protein uS4 family. In terms of assembly, part of the 30S ribosomal subunit. Contacts protein S5. The interaction surface between S4 and S5 is involved in control of translational fidelity.

The protein localises to the plastid. The protein resides in the chloroplast. Its function is as follows. One of the primary rRNA binding proteins, it binds directly to 16S rRNA where it nucleates assembly of the body of the 30S subunit. In terms of biological role, with S5 and S12 plays an important role in translational accuracy. In Ostreococcus tauri, this protein is Small ribosomal subunit protein uS4c (rps4).